Here is a 360-residue protein sequence, read N- to C-terminus: Flavone O-methyltransferase 1 (360 aa).

127–133 (MNQDKVL) serves as a coordination point for substrate. The segment at 159–177 (AFEYHGTDPRFNRVFNEGM) is substrate binding. 5 residues coordinate S-adenosyl-L-methionine: G205, D228, D248, M249, and K262. H266 serves as the catalytic Proton acceptor.

This sequence belongs to the class I-like SAM-binding methyltransferase superfamily. Cation-independent O-methyltransferase family. COMT subfamily. Homodimer.

In terms of biological role, flavone-specific O-methyltransferase with a preference for flavones &gt; flavonols. Active with tricetin, luteolin, quercitin and eriodictyol. Very low activity with phenylpropanoids (5-hydroxyferulic acid and caffeic acid). Catalyzes the sequential O-methylation of tricetin via 3'-O-methyltricetin, 3',5'-O-methyltricetin to 3',4',5'-O-trimethyltricetin. The polypeptide is Flavone O-methyltransferase 1 (OMT1) (Triticum aestivum (Wheat)).